Reading from the N-terminus, the 240-residue chain is MGRSFEVRKASMAKTQGAKIKVYSKYGKEIYMCAKNGGADPDMNLSLKHLISKAKKDQVPAHVIDKALDKATGGGGEDYQHARYEGFAPGGASVIVDCLTDNGNRTFQDVRQCFVKTGAKIGSPGTSAHMFDHQAVFQFKGDDEEAVLEALMMQDADVTDIELEDGVITVFAPNTEFFKVKTALAAEYPDLVLDVEEITFVPQNHTPVTGEDAEKFQKFLDMLDDCDDVQQVYHNAELED.

Belongs to the TACO1 family.

It is found in the cytoplasm. This chain is Probable transcriptional regulatory protein VFMJ11_A0186, found in Aliivibrio fischeri (strain MJ11) (Vibrio fischeri).